A 570-amino-acid polypeptide reads, in one-letter code: Alpha-glucosidase (570 aa).

Asp206 (nucleophile) is an active-site residue. The Proton donor role is filled by Glu263.

Belongs to the glycosyl hydrolase 13 family.

It carries out the reaction Hydrolysis of terminal, non-reducing (1-&gt;4)-linked alpha-D-glucose residues with release of alpha-D-glucose.. This chain is Alpha-glucosidase (MAL2), found in Candida albicans (Yeast).